The sequence spans 191 residues: ATP-dependent Clp protease proteolytic subunit 1 (191 aa).

Ser-91 serves as the catalytic Nucleophile. His-116 is an active-site residue.

It belongs to the peptidase S14 family. In terms of assembly, fourteen ClpP subunits assemble into 2 heptameric rings which stack back to back to give a disk-like structure with a central cavity, resembling the structure of eukaryotic proteasomes.

The protein resides in the cytoplasm. The enzyme catalyses Hydrolysis of proteins to small peptides in the presence of ATP and magnesium. alpha-casein is the usual test substrate. In the absence of ATP, only oligopeptides shorter than five residues are hydrolyzed (such as succinyl-Leu-Tyr-|-NHMec, and Leu-Tyr-Leu-|-Tyr-Trp, in which cleavage of the -Tyr-|-Leu- and -Tyr-|-Trp bonds also occurs).. Functionally, cleaves peptides in various proteins in a process that requires ATP hydrolysis. Has a chymotrypsin-like activity. Plays a major role in the degradation of misfolded proteins. The sequence is that of ATP-dependent Clp protease proteolytic subunit 1 from Chlamydia pneumoniae (Chlamydophila pneumoniae).